The chain runs to 551 residues: Glucans biosynthesis protein D (551 aa).

Residues 1-32 (MDRRRFIKGSMAMAAVCGTSGIASLFSQAAFA) constitute a signal peptide (tat-type signal).

It belongs to the OpgD/OpgG family. In terms of processing, predicted to be exported by the Tat system. The position of the signal peptide cleavage has not been experimentally proven.

Its subcellular location is the periplasm. Its pathway is glycan metabolism; osmoregulated periplasmic glucan (OPG) biosynthesis. Probably involved in the control of the structural glucose backbone of osmoregulated periplasmic glucans (OPGs). The polypeptide is Glucans biosynthesis protein D (Escherichia coli O1:K1 / APEC).